A 201-amino-acid polypeptide reads, in one-letter code: 5'(3')-deoxyribonucleotidase, cytosolic type (201 aa).

D10 (nucleophile) is an active-site residue. Mg(2+) is bound by residues D10 and D12. D12 acts as the Proton donor in catalysis. Residues F18, F44, Y65, T99, and K134 each contribute to the substrate site. Residue D145 participates in Mg(2+) binding. The residue at position 182 (S182) is a Phosphoserine.

Belongs to the 5'(3')-deoxyribonucleotidase family. As to quaternary structure, homodimer. It depends on Mg(2+) as a cofactor. In terms of tissue distribution, detected in skeletal muscle, heart and pancreas.

The protein localises to the cytoplasm. Dephosphorylates the 5' and 2'(3')-phosphates of deoxyribonucleotides, with a preference for dUMP and dTMP, intermediate activity towards dGMP, and low activity towards dCMP and dAMP. The polypeptide is 5'(3')-deoxyribonucleotidase, cytosolic type (NT5C) (Homo sapiens (Human)).